Here is a 392-residue protein sequence, read N- to C-terminus: Chaperone protein DnaJ (392 aa).

The 66-residue stretch at 2 to 67 (DYYSILGISK…QKRDSYDRFG (66 aa)) folds into the J domain. The CR-type zinc finger occupies 148–226 (GVEKELVVSG…CRGQGRVKDK (79 aa)). Positions 161, 164, 178, 181, 200, 203, 214, and 217 each coordinate Zn(2+). 4 CXXCXGXG motif repeats span residues 161 to 168 (CETCSGQG), 178 to 185 (CERCKGSG), 200 to 207 (CPECGGEG), and 214 to 221 (CSSCRGQG).

This sequence belongs to the DnaJ family. In terms of assembly, homodimer. Zn(2+) is required as a cofactor.

It localises to the cytoplasm. Its function is as follows. Participates actively in the response to hyperosmotic and heat shock by preventing the aggregation of stress-denatured proteins and by disaggregating proteins, also in an autonomous, DnaK-independent fashion. Unfolded proteins bind initially to DnaJ; upon interaction with the DnaJ-bound protein, DnaK hydrolyzes its bound ATP, resulting in the formation of a stable complex. GrpE releases ADP from DnaK; ATP binding to DnaK triggers the release of the substrate protein, thus completing the reaction cycle. Several rounds of ATP-dependent interactions between DnaJ, DnaK and GrpE are required for fully efficient folding. Also involved, together with DnaK and GrpE, in the DNA replication of plasmids through activation of initiation proteins. The protein is Chaperone protein DnaJ of Chlamydia pneumoniae (Chlamydophila pneumoniae).